We begin with the raw amino-acid sequence, 111 residues long: Cyanovirin-N homolog (111 aa).

Belongs to the cyanovirin-N family.

Mannose-binding lectin. This Neurospora crassa (strain ATCC 24698 / 74-OR23-1A / CBS 708.71 / DSM 1257 / FGSC 987) protein is Cyanovirin-N homolog.